The sequence spans 635 residues: Probable ethylene response sensor 2 (635 aa).

Helical transmembrane passes span 24-44, 59-79, and 94-114; these read ISDFFIALAYFSIPLELIYFV, FGAFIVLCGATHLINLWTFAI, and ATAVVSCITALMLVHIIPDLL. Cu cation is bound by residues cysteine 66 and histidine 70. Residues 159-308 enclose the GAF domain; it reads DRHTILRTTL…VVADQVAVAL (150 aa). Positions 351–589 constitute a Histidine kinase domain; that stretch reads VMNHEMRTPM…MFFVKLGMPE (239 aa). Histidine 354 is modified (phosphohistidine; by autocatalysis).

The protein belongs to the ethylene receptor family. Homodimer. Cu cation is required as a cofactor.

It is found in the endoplasmic reticulum membrane. It carries out the reaction ATP + protein L-histidine = ADP + protein N-phospho-L-histidine.. In terms of biological role, ethylene receptor related to bacterial two-component regulators. Acts as a negative regulator of ethylene signaling. May play a role in the regulation of flowering by up-regulating GI (GIGANTEA) and RCN1 and regulate starch accumulation by down-regulating the alpha-amylase AMY3D. This chain is Probable ethylene response sensor 2 (ERS2), found in Oryza sativa subsp. japonica (Rice).